A 321-amino-acid polypeptide reads, in one-letter code: MPFITHIKTFAALGSGVIGSGWVARALAHGLDVIAWDPAPGAEQALRQRVANAWPALEKQGLAAGAAQHRLSFVSSIEECVRDADFIQESAPERLDLKLDLHAKISAAAKPDAIIASSTSGLLPSEFYESSSHPERCVVGHPFNPVYLLPLVEIVGGRHTAPEAIEAAKGIYTELGMRPLHVRKEVPGFIADRLLEALWREALHLVNDGVATTGEIDDAIRFGAGLRWSFMGTFLTYTLAGGDAGMRHFMQQFGPALKLPWTYLPAPELTERLIDEVVDGTAAQVGERSIAELERYRDDTLLAVLEAIGTSKAKHGMTFSE.

14–19 (GSGVIG) serves as a coordination point for NAD(+). An important for catalytic activity region spans residues 317-321 (MTFSE).

Belongs to the 3-hydroxyacyl-CoA dehydrogenase family. L-carnitine dehydrogenase subfamily. In terms of assembly, homodimer.

It localises to the cytoplasm. It catalyses the reaction carnitine + NAD(+) = 3-dehydrocarnitine + NADH + H(+). The protein operates within amine and polyamine metabolism; carnitine metabolism. Its activity is regulated as follows. The enzyme activity is strongly inhibited by Ag(+), Ni(+), Hg(+), and p-chloromercuribenzoate, and partially inhibited by Li(+), Ca(2+), Mn(2+), Co(2+), Cu(2+), and Zn(2+). Functionally, catalyzes the NAD(+)-dependent oxidation of L-carnitine to 3-dehydrocarnitine. Is specific for L-carnitine and NAD(+) as substrates since D-carnitine, other carnitine analogs such as choline and betaine, and NADP(+) are not substrates. Despite a high similarity to 3-hydroxyacyl-CoA dehydrogenases, cannot dehydrogenate 3-hydroxybutylate and 3-hydroxybutyl-CoA. Is probably involved in a L-carnitine degradation pathway that allows Pseudomonas sp. strain NBRC 13558 to grow on L-carnitine as the sole source of carbon and nitrogen. This chain is L-carnitine dehydrogenase, found in Pseudomonas sp.